The following is a 374-amino-acid chain: 4-hydroxy-3-methylbut-2-en-1-yl diphosphate synthase (flavodoxin) (374 aa).

[4Fe-4S] cluster-binding residues include cysteine 272, cysteine 275, cysteine 307, and glutamate 314.

This sequence belongs to the IspG family. [4Fe-4S] cluster serves as cofactor.

The enzyme catalyses (2E)-4-hydroxy-3-methylbut-2-enyl diphosphate + oxidized [flavodoxin] + H2O + 2 H(+) = 2-C-methyl-D-erythritol 2,4-cyclic diphosphate + reduced [flavodoxin]. The protein operates within isoprenoid biosynthesis; isopentenyl diphosphate biosynthesis via DXP pathway; isopentenyl diphosphate from 1-deoxy-D-xylulose 5-phosphate: step 5/6. In terms of biological role, converts 2C-methyl-D-erythritol 2,4-cyclodiphosphate (ME-2,4cPP) into 1-hydroxy-2-methyl-2-(E)-butenyl 4-diphosphate. In Acidiphilium cryptum (strain JF-5), this protein is 4-hydroxy-3-methylbut-2-en-1-yl diphosphate synthase (flavodoxin).